A 466-amino-acid polypeptide reads, in one-letter code: GTP cyclohydrolase 1 (466 aa).

3 residues coordinate Zn(2+): Cys-342, His-345, and Cys-416.

This sequence belongs to the GTP cyclohydrolase I family. Homodimer.

The enzyme catalyses GTP + H2O = 7,8-dihydroneopterin 3'-triphosphate + formate + H(+). The protein operates within cofactor biosynthesis; 7,8-dihydroneopterin triphosphate biosynthesis; 7,8-dihydroneopterin triphosphate from GTP: step 1/1. Its function is as follows. GTP cyclohydrolase 1 is the first enzyme in the biosynthetic pathway leading to folic acid. The chain is GTP cyclohydrolase 1 (GCH1) from Arabidopsis thaliana (Mouse-ear cress).